The chain runs to 203 residues: Urease accessory protein UreG (203 aa).

14–21 is a GTP binding site; that stretch reads GPVGSGKT.

Belongs to the SIMIBI class G3E GTPase family. UreG subfamily. In terms of assembly, homodimer. UreD, UreF and UreG form a complex that acts as a GTP-hydrolysis-dependent molecular chaperone, activating the urease apoprotein by helping to assemble the nickel containing metallocenter of UreC. The UreE protein probably delivers the nickel.

Its subcellular location is the cytoplasm. Facilitates the functional incorporation of the urease nickel metallocenter. This process requires GTP hydrolysis, probably effectuated by UreG. The protein is Urease accessory protein UreG of Rhizobium leguminosarum bv. trifolii (strain WSM2304).